We begin with the raw amino-acid sequence, 406 residues long: Tyrosine--tRNA ligase (406 aa).

Tyrosine 35 is a binding site for L-tyrosine. Residues 40-49 carry the 'HIGH' region motif; sequence PTADSLHVGH. Tyrosine 168 and glutamine 172 together coordinate L-tyrosine. The 'KMSKS' region motif lies at 228 to 232; that stretch reads KMGKT. Residue lysine 231 coordinates ATP. The S4 RNA-binding domain occupies 340–404; that stretch reads LPILDVMAST…RGKKNYNKIE (65 aa).

This sequence belongs to the class-I aminoacyl-tRNA synthetase family. TyrS type 1 subfamily. Homodimer.

The protein localises to the cytoplasm. It carries out the reaction tRNA(Tyr) + L-tyrosine + ATP = L-tyrosyl-tRNA(Tyr) + AMP + diphosphate + H(+). In terms of biological role, catalyzes the attachment of tyrosine to tRNA(Tyr) in a two-step reaction: tyrosine is first activated by ATP to form Tyr-AMP and then transferred to the acceptor end of tRNA(Tyr). This is Tyrosine--tRNA ligase from Clostridium beijerinckii (strain ATCC 51743 / NCIMB 8052) (Clostridium acetobutylicum).